Reading from the N-terminus, the 354-residue chain is Uroporphyrinogen decarboxylase (354 aa).

Substrate is bound by residues 27 to 31 (RQAGR), Asp77, Tyr154, Ser209, and His327.

Belongs to the uroporphyrinogen decarboxylase family. In terms of assembly, homodimer.

The protein localises to the cytoplasm. The enzyme catalyses uroporphyrinogen III + 4 H(+) = coproporphyrinogen III + 4 CO2. The protein operates within porphyrin-containing compound metabolism; protoporphyrin-IX biosynthesis; coproporphyrinogen-III from 5-aminolevulinate: step 4/4. Catalyzes the decarboxylation of four acetate groups of uroporphyrinogen-III to yield coproporphyrinogen-III. In Shewanella piezotolerans (strain WP3 / JCM 13877), this protein is Uroporphyrinogen decarboxylase.